Consider the following 166-residue polypeptide: Glycine cleavage system H protein 3, mitochondrial (166 aa).

The N-terminal 35 residues, 1–35 (MALRMWASSTANALKLSSSASKSHLLPAFSISRCF), are a transit peptide targeting the mitochondrion. The 83-residue stretch at 57 to 139 (VATIGITDHA…YEDGWMIKVK (83 aa)) folds into the Lipoyl-binding domain. N6-lipoyllysine is present on lysine 98. Phosphoserine is present on serine 141.

This sequence belongs to the GcvH family. In terms of assembly, the glycine cleavage system is composed of four proteins: P, T, L and H. It depends on (R)-lipoate as a cofactor. Post-translationally, S-nitrosylated and/or glutathionylated at unknown positions in response to nitric oxide.

It localises to the mitochondrion. Its activity is regulated as follows. Inhibited by harpin, S-nitrosoglutathione (GSNO), nitric oxide, N-ethylmaleimide and 5,5'-dithiobis-(2-nitrobenzoic acid). The glycine decarboxylase (GDC) or glycine cleavage system catalyzes the degradation of glycine. The H protein shuttles the methylamine group of glycine from the P protein to the T protein. The polypeptide is Glycine cleavage system H protein 3, mitochondrial (GDH3) (Arabidopsis thaliana (Mouse-ear cress)).